Consider the following 467-residue polypeptide: Gamma-aminobutyric acid receptor subunit gamma-3 (467 aa).

Positions 1–17 (MAAKLLLLLCLFSGLHA) are cleaved as a signal peptide. Residues 18-256 (RSRRVEEDEN…FELSRRMGYF (239 aa)) lie on the Extracellular side of the membrane. A glycan (N-linked (GlcNAc...) asparagine) is linked at asparagine 110. An intrachain disulfide couples cysteine 171 to cysteine 185. N-linked (GlcNAc...) asparagine glycosylation is present at asparagine 228. The chain crosses the membrane as a helical span at residues 257 to 277 (TIQTYIPCILTVVLSWVSFWI). The Cytoplasmic segment spans residues 278–283 (KKDATP). A helical membrane pass occupies residues 284–303 (ARTTLGITTVLTMTTLSTIA). Residues 304-311 (RKSLPRVS) lie on the Extracellular side of the membrane. The chain crosses the membrane as a helical span at residues 312–332 (YVTAMDLFVTVCFLFVFAALM). Topologically, residues 333–446 (EYATLNYYSS…DVSELDSYSR (114 aa)) are cytoplasmic. Residues 447-467 (VFFPTSFLLFNLVYWVGYLYL) form a helical membrane-spanning segment.

It belongs to the ligand-gated ion channel (TC 1.A.9) family. Gamma-aminobutyric acid receptor (TC 1.A.9.5) subfamily. GABRG3 sub-subfamily. Heteropentamer, formed by a combination of alpha (GABRA1-6), beta (GABRB1-3), gamma (GABRG1-3), delta (GABRD), epsilon (GABRE), rho (GABRR1-3), pi (GABRP) and theta (GABRQ) chains, each subunit exhibiting distinct physiological and pharmacological properties. Post-translationally, may be palmitoylated. As to expression, expressed in brain.

The protein localises to the postsynaptic cell membrane. Its subcellular location is the cell membrane. It carries out the reaction chloride(in) = chloride(out). In terms of biological role, gamma subunit of the heteropentameric ligand-gated chloride channel gated by gamma-aminobutyric acid (GABA), a major inhibitory neurotransmitter in the brain. GABA-gated chloride channels, also named GABA(A) receptors (GABAAR), consist of five subunits arranged around a central pore and contain GABA active binding site(s) located at the alpha and beta subunit interface(s). When activated by GABA, GABAARs selectively allow the flow of chloride across the cell membrane down their electrochemical gradient. The polypeptide is Gamma-aminobutyric acid receptor subunit gamma-3 (Mus musculus (Mouse)).